The chain runs to 797 residues: G-patch domain-containing protein C1486.03 (797 aa).

Over residues 1–12 (MQNEYVDMNSSS) the composition is skewed to polar residues. 2 disordered regions span residues 1–33 (MQNEYVDMNSSSEDSDGDSILEEGRLRPSFRGQ) and 159–204 (VRER…SSEE). The 47-residue stretch at 115-161 (TTGFGAKMLEKMGYKQGQGLGANAEGIAEPVQSKLRPERVGLGAVRE) folds into the G-patch domain. Residues 159–185 (VRERTEKQRKEAIARGEISDSEDEKHT) are compositionally biased toward basic and acidic residues. The segment covering 186-199 (VKQKPLREKKKKPL) has biased composition (basic residues).

It belongs to the TFP11/STIP family.

The protein resides in the cytoplasm. It is found in the cytoskeleton. Its subcellular location is the microtubule organizing center. The protein localises to the spindle pole body. The sequence is that of G-patch domain-containing protein C1486.03 from Schizosaccharomyces pombe (strain 972 / ATCC 24843) (Fission yeast).